The chain runs to 234 residues: Adenosine 5'-phosphosulfate reductase (234 aa).

Cys120, Cys121, Cys203, and Cys206 together coordinate [4Fe-4S] cluster. Cys229 acts as the Nucleophile; cysteine thiosulfonate intermediate in catalysis.

Belongs to the PAPS reductase family. CysH subfamily. It depends on [4Fe-4S] cluster as a cofactor.

The protein resides in the cytoplasm. The enzyme catalyses [thioredoxin]-disulfide + sulfite + AMP + 2 H(+) = adenosine 5'-phosphosulfate + [thioredoxin]-dithiol. The protein operates within sulfur metabolism; hydrogen sulfide biosynthesis; sulfite from sulfate. Functionally, catalyzes the formation of sulfite from adenosine 5'-phosphosulfate (APS) using thioredoxin as an electron donor. The polypeptide is Adenosine 5'-phosphosulfate reductase (Bacillus cereus (strain AH820)).